The following is a 273-amino-acid chain: Formamidopyrimidine-DNA glycosylase (273 aa).

The active-site Schiff-base intermediate with DNA is Pro-2. The active-site Proton donor is Glu-3. The active-site Proton donor; for beta-elimination activity is Lys-60. DNA contacts are provided by His-94, Arg-113, and Lys-154. The segment at 239–273 (EAYGRTGEPCRRCGTPIERIVVAQRSTHICPVCQA) adopts an FPG-type zinc-finger fold. The active-site Proton donor; for delta-elimination activity is Arg-263.

The protein belongs to the FPG family. Monomer. Requires Zn(2+) as cofactor.

It catalyses the reaction Hydrolysis of DNA containing ring-opened 7-methylguanine residues, releasing 2,6-diamino-4-hydroxy-5-(N-methyl)formamidopyrimidine.. The enzyme catalyses 2'-deoxyribonucleotide-(2'-deoxyribose 5'-phosphate)-2'-deoxyribonucleotide-DNA = a 3'-end 2'-deoxyribonucleotide-(2,3-dehydro-2,3-deoxyribose 5'-phosphate)-DNA + a 5'-end 5'-phospho-2'-deoxyribonucleoside-DNA + H(+). In terms of biological role, involved in base excision repair of DNA damaged by oxidation or by mutagenic agents. Acts as a DNA glycosylase that recognizes and removes damaged bases. Has a preference for oxidized purines, such as 7,8-dihydro-8-oxoguanine (8-oxoG). Has AP (apurinic/apyrimidinic) lyase activity and introduces nicks in the DNA strand. Cleaves the DNA backbone by beta-delta elimination to generate a single-strand break at the site of the removed base with both 3'- and 5'-phosphates. The chain is Formamidopyrimidine-DNA glycosylase from Herpetosiphon aurantiacus (strain ATCC 23779 / DSM 785 / 114-95).